Reading from the N-terminus, the 337-residue chain is tRNA N6-adenosine threonylcarbamoyltransferase (337 aa).

Residues H111 and H115 each contribute to the Fe cation site. Residues 134-138, D167, G180, and N272 contribute to the substrate site; that span reads LVSGG. A Fe cation-binding site is contributed by D300.

Belongs to the KAE1 / TsaD family. It depends on Fe(2+) as a cofactor.

The protein localises to the cytoplasm. The enzyme catalyses L-threonylcarbamoyladenylate + adenosine(37) in tRNA = N(6)-L-threonylcarbamoyladenosine(37) in tRNA + AMP + H(+). Its function is as follows. Required for the formation of a threonylcarbamoyl group on adenosine at position 37 (t(6)A37) in tRNAs that read codons beginning with adenine. Is involved in the transfer of the threonylcarbamoyl moiety of threonylcarbamoyl-AMP (TC-AMP) to the N6 group of A37, together with TsaE and TsaB. TsaD likely plays a direct catalytic role in this reaction. The polypeptide is tRNA N6-adenosine threonylcarbamoyltransferase (Escherichia coli (strain SMS-3-5 / SECEC)).